The chain runs to 1237 residues: Glutamate receptor ionotropic, NMDA 2C (1237 aa).

The signal sequence occupies residues 1 to 19 (MGGALGPALLLTSLLGAWA). Over 20 to 554 (RLGAGQGEQA…SAFLEPYSPA (535 aa)) the chain is Extracellular. N70 and N73 each carry an N-linked (GlcNAc...) asparagine glycan. Residues C82 and C317 are joined by a disulfide bond. N-linked (GlcNAc...) asparagine glycosylation is found at N337 and N438. Cystine bridges form between C426–C453 and C433–C454. The L-glutamate site is built by S509, T511, and R516. The N-linked (GlcNAc...) asparagine glycan is linked to N539. Residues 555-575 (VWVMMFVMCLTVVAITVFMFE) form a helical membrane-spanning segment. At 576–601 (YFSPVSYNQNLTKGKKPGGPSFTIGK) the chain is on the cytoplasmic side. Residues 601 to 620 (KSVWLLWALVFNNSVPIENP) form a pore-forming region. Residues 602 to 611 (SVWLLWALVF) constitute an intramembrane region (discontinuously helical). Residues 612 to 622 (NNSVPIENPRG) are Cytoplasmic-facing. Residues 623–644 (TTSKIMVLVWAFFAVIFLASYT) traverse the membrane as a helical segment. The Extracellular portion of the chain corresponds to 645–813 (ANLAAFMIQE…EVMSSKLDID (169 aa)). Residue N685 is glycosylated (N-linked (GlcNAc...) asparagine). L-glutamate-binding residues include S687, T688, and D729. The cysteines at positions 743 and 798 are disulfide-linked. A helical transmembrane segment spans residues 814–833 (NMAGVFYMLLVAMGLALLVF). The Cytoplasmic portion of the chain corresponds to 834 to 1237 (AWEHLVYWKL…RRVSSLESEV (404 aa)). 3 positions are modified to phosphoserine: S875, S881, and S912. Polar residues predominate over residues 907 to 925 (ADVSSSLDRATRTIENWGN). Residues 907 to 990 (ADVSSSLDRA…LPDVSRPSCR (84 aa)) are disordered. The span at 930–941 (PAPTASGPRSST) shows a compositional bias: low complexity. The segment covering 968 to 982 (PQPPARPATCGPPLP) has biased composition (pro residues). A PDZ-binding motif is present at residues 1235–1237 (SEV).

Belongs to the glutamate-gated ion channel (TC 1.A.10.1) family. NR2C/GRIN2C subfamily. In terms of assembly, heterotetramer. Forms heterotetrameric channels composed of two GluN1/zeta subunits (GRIN1), and two identical GluN2/epsilon subunits (GRIN2A, GRIN2B, GRIN2C or GRIN2D) or GluN3 subunits (GRIN3A or GRIN3B) (in vitro). In vivo, the subunit composition may depend on the expression levels of the different subunits. Interacts with PDZ domains of PATJ and DLG4. Interacts (via PDZ-binding motif) with SNX27 (via PDZ domain); the interaction is required for recycling to the plasma membrane when endocytosed and prevent degradation in lysosomes. Detected in cerebellum.

It localises to the cell membrane. Its subcellular location is the postsynaptic cell membrane. The enzyme catalyses Ca(2+)(in) = Ca(2+)(out). The catalysed reaction is Na(+)(in) = Na(+)(out). It carries out the reaction K(+)(in) = K(+)(out). Its function is as follows. Component of N-methyl-D-aspartate (NMDA) receptors (NMDARs) that function as heterotetrameric, ligand-gated cation channels with high calcium permeability and voltage-dependent block by Mg(2+). Participates in synaptic plasticity for learning and memory formation by contributing to the slow phase of excitatory postsynaptic current and long-term synaptic potentiation. Channel activation requires binding of the neurotransmitter L-glutamate to the GluN2 subunit, glycine or D-serine binding to the GluN1 subunit, plus membrane depolarization to eliminate channel inhibition by Mg(2+). NMDARs mediate simultaneously the potasium efflux and the influx of calcium and sodium. Each GluN2 subunit confers differential attributes to channel properties, including activation, deactivation and desensitization kinetics, pH sensitivity, Ca2(+) permeability, and binding to allosteric modulators. This is Glutamate receptor ionotropic, NMDA 2C from Rattus norvegicus (Rat).